A 171-amino-acid polypeptide reads, in one-letter code: Co-chaperone protein HscB homolog (171 aa).

The J domain occupies 2–69 (NHFELFDLPV…DSRAAYLLSL (68 aa)).

The protein belongs to the HscB family. As to quaternary structure, interacts with HscA and stimulates its ATPase activity.

Co-chaperone involved in the maturation of iron-sulfur cluster-containing proteins. Seems to help targeting proteins to be folded toward HscA. In Acinetobacter baylyi (strain ATCC 33305 / BD413 / ADP1), this protein is Co-chaperone protein HscB homolog.